Reading from the N-terminus, the 217-residue chain is 3-demethoxyubiquinol 3-hydroxylase (217 aa).

Residues Glu66, Glu96, His99, Glu148, Glu180, and His183 each coordinate Fe cation.

This sequence belongs to the COQ7 family. Fe cation is required as a cofactor.

It localises to the cell membrane. It catalyses the reaction a 5-methoxy-2-methyl-3-(all-trans-polyprenyl)benzene-1,4-diol + AH2 + O2 = a 3-demethylubiquinol + A + H2O. It participates in cofactor biosynthesis; ubiquinone biosynthesis. Catalyzes the hydroxylation of 2-nonaprenyl-3-methyl-6-methoxy-1,4-benzoquinol during ubiquinone biosynthesis. The polypeptide is 3-demethoxyubiquinol 3-hydroxylase (Xylella fastidiosa (strain 9a5c)).